The following is an 855-amino-acid chain: Dynein axonemal assembly factor 5 (855 aa).

Ala-2 is modified (N-acetylalanine). HEAT repeat units lie at residues 71–109 (GPWARLLLPRLLRCLSDPAEGCRALAVHLLDLGLRRAAR), 202–240 (HMQSESLIGPLMQTISHQHWKVRVAAIEATGAVIHFGNG), 241–278 (KSVDDVLSHFAQRLFDDVPQVRRAVASVVGGWLLCLRD), 280–318 (YSFFHKLIPLLLSSLNDEVPEVRQLAASLWEDVGLQWQK), 354–376 (FRNLSKILPALCHDITDWVVGTR), 377–414 (VKSAQLLPVLLLHAEDHATQHLEVVLRTLFQACTDEEA), 599–638 (GEALPHVVPTLRACLQPSQDPQMRLKLFSILSTVLLRATD), 696–734 (RDVQETLMPQVLTTLEEDSKMTRLISCRIINTFLKTSGG), 738–776 (PEKLIRIYPELLKRLDDVSNDVRMAAASTLVTWLQCVKG), and 784–822 (QSSVQYLYRELLVHLDDPERAIQDAILEVLKEGSGLFPD).

Belongs to the DNAAF5 family. As to quaternary structure, interacts with DNAI2; probably involved in outer arm dynein assembly. In terms of tissue distribution, expressed in nasal epithelium and lung epithelium by ciliated cells (at protein level).

The protein localises to the cytoplasm. Its subcellular location is the dynein axonemal particle. Cytoplasmic protein involved in the delivery of the dynein machinery to the motile cilium. It is required for the assembly of the axonemal dynein inner and outer arms, two structures attached to the peripheral outer doublet A microtubule of the axoneme, that play a crucial role in cilium motility. This Homo sapiens (Human) protein is Dynein axonemal assembly factor 5.